A 384-amino-acid polypeptide reads, in one-letter code: Transcription factor 7 (384 aa).

Residues 1–16 are compositionally biased toward gly residues; the sequence is MPQLDSGGGGAGGGDD. The segment at 1–59 is CTNNB1-binding; that stretch reads MPQLDSGGGGAGGGDDLGAPDELLAFQDEGEEQDDKSRDSAAGPERDLAELKSSLVNES. 3 disordered regions span residues 1–88, 133–183, and 337–384; these read MPQL…LGRE, PPSG…QKQV, and SARD…MTVL. Residues 35-50 are compositionally biased toward basic and acidic residues; sequence DKSRDSAAGPERDLAE. Gly residues predominate over residues 62–78; that stretch reads AAGGAGIPGVPGAGAGA. The segment at residues 269–337 is a DNA-binding region (HMG box); that stretch reads IKKPLNAFML…LHMQLYPGWS (69 aa). Positions 344-348 match the Nuclear localization signal motif; the sequence is KKKRR. Over residues 352-370 the composition is skewed to basic and acidic residues; the sequence is KHQESTTGGKRNAFGTYPE. The segment covering 374-384 has biased composition (low complexity); that stretch reads APAPFLPMTVL.

This sequence belongs to the TCF/LEF family. Binds the armadillo repeat of CTNNB1 and forms a stable complex. Interacts with TLE5, TLE1, TLE2, TLE3 and TLE4. Interacts with MLLT11. Long isoform interacts (via N-terminus) with SOX13; inhibits WNT-mediated transcriptional activity. Interacts with DAZAP2. In terms of tissue distribution, predominantly expressed in T-cells. Also detected in proliferating intestinal epithelial cells and in the basal epithelial cells of mammary gland epithelium.

It localises to the nucleus. In terms of biological role, transcriptional activator involved in T-cell lymphocyte differentiation. Necessary for the survival of CD4(+) CD8(+) immature thymocytes. Isoforms lacking the N-terminal CTNNB1 binding domain cannot fulfill this role. Binds to the T-lymphocyte-specific enhancer element (5'-WWCAAAG-3') found in the promoter of the CD3E gene. Represses expression of the T-cell receptor gamma gene in alpha-beta T-cell lineages. Required for the development of natural killer receptor-positive lymphoid tissue inducer T-cells. TLE1, TLE2, TLE3 and TLE4 repress transactivation mediated by TCF7 and CTNNB1. May also act as feedback transcriptional repressor of CTNNB1 and TCF7L2 target genes. This chain is Transcription factor 7, found in Homo sapiens (Human).